A 205-amino-acid chain; its full sequence is Probable thymidylate kinase (205 aa).

Residue 7 to 14 (GIDGAGKS) coordinates ATP.

It belongs to the thymidylate kinase family.

The enzyme catalyses dTMP + ATP = dTDP + ADP. The sequence is that of Probable thymidylate kinase from Thermococcus onnurineus (strain NA1).